A 364-amino-acid chain; its full sequence is 3-isopropylmalate dehydrogenase (364 aa).

Residue 79–90 participates in NAD(+) binding; it reads GPKWGTGSVRPE. The substrate site is built by Arg-97, Arg-107, Arg-136, and Asp-225. Residues Asp-225, Asp-250, and Asp-254 each contribute to the Mg(2+) site. Residue 289–300 coordinates NAD(+); it reads GSAPDLPKNKVN.

It belongs to the isocitrate and isopropylmalate dehydrogenases family. Homodimer. The cofactor is Mg(2+). Mn(2+) serves as cofactor.

The protein resides in the cytoplasm. The catalysed reaction is (2R,3S)-3-isopropylmalate + NAD(+) = 4-methyl-2-oxopentanoate + CO2 + NADH. It functions in the pathway amino-acid biosynthesis; L-leucine biosynthesis; L-leucine from 3-methyl-2-oxobutanoate: step 3/4. Its function is as follows. Catalyzes the oxidation of 3-carboxy-2-hydroxy-4-methylpentanoate (3-isopropylmalate) to 3-carboxy-4-methyl-2-oxopentanoate. The product decarboxylates to 4-methyl-2 oxopentanoate. This Saccharomyces cerevisiae (strain ATCC 204508 / S288c) (Baker's yeast) protein is 3-isopropylmalate dehydrogenase (LEU2).